Reading from the N-terminus, the 431-residue chain is Beta-lactamase hydrolase-like protein (431 aa).

Zn(2+)-binding residues include H212, H214, and H286. D309 lines the substrate pocket.

Belongs to the metallo-beta-lactamase superfamily. The cofactor is Zn(2+).

In terms of biological role, could play a role in cell adherence or biofilm development. This is Beta-lactamase hydrolase-like protein from Xylella fastidiosa (strain 9a5c).